A 454-amino-acid polypeptide reads, in one-letter code: Pup--protein ligase (454 aa).

A Mg(2+)-binding site is contributed by Glu9. Arg53 serves as a coordination point for ATP. Tyr55 is a Mg(2+) binding site. Asp57 serves as the catalytic Proton acceptor. Mg(2+) is bound at residue Glu63. ATP contacts are provided by Thr66 and Trp420.

It belongs to the Pup ligase/Pup deamidase family. Pup-conjugating enzyme subfamily.

The enzyme catalyses ATP + [prokaryotic ubiquitin-like protein]-L-glutamate + [protein]-L-lysine = ADP + phosphate + N(6)-([prokaryotic ubiquitin-like protein]-gamma-L-glutamyl)-[protein]-L-lysine.. It participates in protein degradation; proteasomal Pup-dependent pathway. It functions in the pathway protein modification; protein pupylation. Its function is as follows. Catalyzes the covalent attachment of the prokaryotic ubiquitin-like protein modifier Pup to the proteasomal substrate proteins, thereby targeting them for proteasomal degradation. This tagging system is termed pupylation. The ligation reaction involves the side-chain carboxylate of the C-terminal glutamate of Pup and the side-chain amino group of a substrate lysine. This chain is Pup--protein ligase, found in Arthrobacter sp. (strain FB24).